Here is a 136-residue protein sequence, read N- to C-terminus: T-cell receptor alpha chain constant (136 aa).

One can recognise an Ig-like C1-type domain in the interval 19 to 103 (STLCLFTDFD…LTEKSFETDM (85 aa)). Cysteines 22 and 72 form a disulfide. Residues Asn-66, Asn-80, and Asn-109 are each glycosylated (N-linked (GlcNAc...) asparagine). A connecting peptide region spans residues 90-111 (CDATLTEKSFETDMNLNFQNLS). The helical transmembrane segment at 111–131 (SVMGLRILLLKVAGFNLLMTL) threads the bilayer. The Cytoplasmic portion of the chain corresponds to 132 to 136 (RLWSS).

In terms of assembly, alpha-beta TR is a heterodimer composed of an alpha and beta chain; disulfide-linked. The alpha-beta TR is associated with the transmembrane signaling CD3 coreceptor proteins to form the TR-CD3 (TcR or TCR). The assembly of alpha-beta TR heterodimers with CD3 occurs in the endoplasmic reticulum where a single alpha-beta TR heterodimer associates with one CD3D-CD3E heterodimer, one CD3G-CD3E heterodimer and one CD247 homodimer forming a stable octameric structure. CD3D-CD3E and CD3G-CD3E heterodimers preferentially associate with TR alpha and TR beta chains, respectively. The association of the CD247 homodimer is the last step of TcR assembly in the endoplasmic reticulum and is required for transport to the cell surface.

The protein resides in the cell membrane. Functionally, constant region of T cell receptor (TR) alpha chain. Alpha-beta T cell receptors are antigen specific receptors which are essential to the immune response and are present on the cell surface of T lymphocytes. Recognize peptide-major histocompatibility (MH) (pMH) complexes that are displayed by antigen presenting cells (APC), a prerequisite for efficient T cell adaptive immunity against pathogens. Binding of alpha-beta TR to pMH complex initiates TR-CD3 clustering on the cell surface and intracellular activation of LCK that phosphorylates the ITAM motifs of CD3G, CD3D, CD3E and CD247 enabling the recruitment of ZAP70. In turn, ZAP70 phosphorylates LAT, which recruits numerous signaling molecules to form the LAT signalosome. The LAT signalosome propagates signal branching to three major signaling pathways, the calcium, the mitogen-activated protein kinase (MAPK) kinase and the nuclear factor NF-kappa-B (NF-kB) pathways, leading to the mobilization of transcription factors that are critical for gene expression and essential for T cell growth and differentiation. The T cell repertoire is generated in the thymus, by V-(D)-J rearrangement. This repertoire is then shaped by intrathymic selection events to generate a peripheral T cell pool of self-MH restricted, non-autoaggressive T cells. Post-thymic interaction of alpha-beta TR with the pMH complexes shapes TR structural and functional avidity. The protein is T-cell receptor alpha chain constant of Mus musculus (Mouse).